Here is a 381-residue protein sequence, read N- to C-terminus: Alkanesulfonate monooxygenase (381 aa).

Belongs to the SsuD family. As to quaternary structure, homotetramer.

The enzyme catalyses an alkanesulfonate + FMNH2 + O2 = an aldehyde + FMN + sulfite + H2O + 2 H(+). Functionally, catalyzes the desulfonation of aliphatic sulfonates. This is Alkanesulfonate monooxygenase from Escherichia coli O8 (strain IAI1).